The following is a 430-amino-acid chain: Tol-Pal system protein TolB (430 aa).

The first 21 residues, 1–21 (MKQALRVAFGFLMLWAAVLHA), serve as a signal peptide directing secretion.

It belongs to the TolB family. As to quaternary structure, the Tol-Pal system is composed of five core proteins: the inner membrane proteins TolA, TolQ and TolR, the periplasmic protein TolB and the outer membrane protein Pal. They form a network linking the inner and outer membranes and the peptidoglycan layer.

The protein resides in the periplasm. Its function is as follows. Part of the Tol-Pal system, which plays a role in outer membrane invagination during cell division and is important for maintaining outer membrane integrity. TolB occupies a key intermediary position in the Tol-Pal system because it communicates directly with both membrane-embedded components, Pal in the outer membrane and TolA in the inner membrane. The sequence is that of Tol-Pal system protein TolB from Salmonella typhi.